The sequence spans 147 residues: Deoxyuridine 5'-triphosphate nucleotidohydrolase (147 aa).

Residues 67-69 (RSG), Asn-80, and 84-86 (LID) each bind substrate.

The protein belongs to the dUTPase family. Mg(2+) serves as cofactor.

The catalysed reaction is dUTP + H2O = dUMP + diphosphate + H(+). Its pathway is pyrimidine metabolism; dUMP biosynthesis; dUMP from dCTP (dUTP route): step 2/2. This enzyme is involved in nucleotide metabolism: it produces dUMP, the immediate precursor of thymidine nucleotides and it decreases the intracellular concentration of dUTP so that uracil cannot be incorporated into DNA. The chain is Deoxyuridine 5'-triphosphate nucleotidohydrolase from Gloeobacter violaceus (strain ATCC 29082 / PCC 7421).